Reading from the N-terminus, the 82-residue chain is Small ribosomal subunit protein bS16 (82 aa).

It belongs to the bacterial ribosomal protein bS16 family.

This Acidobacterium capsulatum (strain ATCC 51196 / DSM 11244 / BCRC 80197 / JCM 7670 / NBRC 15755 / NCIMB 13165 / 161) protein is Small ribosomal subunit protein bS16.